The chain runs to 1157 residues: Myosin tail region-interacting protein MTI1 (1157 aa).

In terms of domain architecture, SH3 spans 5–69; sequence EVPFKVVAQF…PKSFVAVQGS (65 aa). Disordered stretches follow at residues 68-116 and 135-156; these read GSEV…GPVP and TAVSAQVQHDSSSGNGERKVPM. Residues 77–89 are compositionally biased toward polar residues; sequence SSPNTGSTEQRTI. Residues 93–110 show a composition bias toward basic and acidic residues; the sequence is VEQKDLPEPISPETKKET. Position 103 is a phosphoserine (S103). Positions 138-149 are enriched in polar residues; it reads SAQVQHDSSSGN. Phosphoserine is present on residues S158 and S166. Disordered regions lie at residues 231–256 and 284–888; these read PEPINRAQVESGRIETENDQLKKDLP and KKAK…PKVA. Coiled coils occupy residues 234–301 and 356–430; these read INRA…NKNE and EKEQ…GASR. 3 stretches are compositionally biased toward basic and acidic residues: residues 242–256, 284–296, and 312–383; these read GRIETENDQLKKDLP, KKAKLEQEHERSA, and NEKT…RGEN. The segment covering 398 to 411 has biased composition (acidic residues); the sequence is EGDNDEEKEEEDSE. Basic and acidic residues-rich tracts occupy residues 412–423 and 506–524; these read ENRRAALRERMA and KTLDPHATTEHEQKQEHGT. The span at 544–558 shows a compositional bias: acidic residues; sequence DSDEDTDDHEFEDAN. S565 bears the Phosphoserine mark. The segment covering 574 to 585 has biased composition (low complexity); the sequence is GNNESENVNSGE. A compositionally biased stretch (basic and acidic residues) spans 597–606; the sequence is RTAEVSHDIE. Positions 607–641 are enriched in polar residues; it reads NSSQNTTGNVLPVSSPQTRVARNGSINSLTKSISG. Phosphoserine occurs at positions 621, 631, and 634. T636 bears the Phosphothreonine mark. Phosphoserine occurs at positions 638 and 647. Residues 642-653 are compositionally biased toward basic and acidic residues; the sequence is ENRRKSINEYHD. The segment covering 654–668 has biased composition (polar residues); sequence TVSTNSSALTETAQD. 2 stretches are compositionally biased toward pro residues: residues 691–738 and 747–765; these read PHPV…PVSS and SIPPVPPTPPAPPAPPAPL. Basic and acidic residues predominate over residues 769–778; the sequence is KHNEVEEHVK. Residues 795-808 show a composition bias toward pro residues; that stretch reads NTAPPLPRAPPVPP. The span at 832–853 shows a compositional bias: polar residues; it reads QNVTASTPSMMSTQQRVPTSVL. A Phosphothreonine modification is found at T850. The residue at position 889 (S889) is a Phosphoserine. A phosphothreonine mark is found at T894 and T895. K1012 is covalently cross-linked (Glycyl lysine isopeptide (Lys-Gly) (interchain with G-Cter in ubiquitin)).

Binds to the SH3 domains of the type I myosins MYO3 and MYO5.

The protein localises to the cytoplasm. The protein resides in the cytoskeleton. Its subcellular location is the actin patch. Involved in the regulation of actin cytoskeleton. This Saccharomyces cerevisiae (strain ATCC 204508 / S288c) (Baker's yeast) protein is Myosin tail region-interacting protein MTI1 (BBC1).